Consider the following 237-residue polypeptide: Uridylate kinase (237 aa).

12-15 (KLSG) serves as a coordination point for ATP. The segment at 20 to 25 (GENGYG) is involved in allosteric activation by GTP. UMP is bound at residue Gly54. ATP contacts are provided by Gly55 and Arg59. Residues Asp72 and 133–140 (TGNPYFST) contribute to the UMP site. 2 residues coordinate ATP: Tyr166 and Asp169.

It belongs to the UMP kinase family. In terms of assembly, homohexamer.

It is found in the cytoplasm. The catalysed reaction is UMP + ATP = UDP + ADP. It participates in pyrimidine metabolism; CTP biosynthesis via de novo pathway; UDP from UMP (UMPK route): step 1/1. With respect to regulation, allosterically activated by GTP. Inhibited by UTP. Its function is as follows. Catalyzes the reversible phosphorylation of UMP to UDP. This is Uridylate kinase from Clostridium tetani (strain Massachusetts / E88).